Consider the following 366-residue polypeptide: Aminomethyltransferase (366 aa).

Belongs to the GcvT family. As to quaternary structure, the glycine cleavage system is composed of four proteins: P, T, L and H.

The catalysed reaction is N(6)-[(R)-S(8)-aminomethyldihydrolipoyl]-L-lysyl-[protein] + (6S)-5,6,7,8-tetrahydrofolate = N(6)-[(R)-dihydrolipoyl]-L-lysyl-[protein] + (6R)-5,10-methylene-5,6,7,8-tetrahydrofolate + NH4(+). The glycine cleavage system catalyzes the degradation of glycine. This chain is Aminomethyltransferase, found in Bordetella avium (strain 197N).